The sequence spans 125 residues: Translation initiation factor 5A (125 aa).

A Hypusine modification is found at Lys-35.

This sequence belongs to the eIF-5A family.

It localises to the cytoplasm. Its function is as follows. Functions by promoting the formation of the first peptide bond. This is Translation initiation factor 5A (eIF5A) from Methanosphaerula palustris (strain ATCC BAA-1556 / DSM 19958 / E1-9c).